We begin with the raw amino-acid sequence, 228 residues long: DNA-3-methyladenine glycosylase 1 (228 aa).

Catalysis depends on aspartate 170, which acts as the Proton acceptor.

The protein belongs to the alkylbase DNA glycosidase AlkA family.

The enzyme catalyses Hydrolysis of alkylated DNA, releasing 3-methyladenine, 3-methylguanine, 7-methylguanine and 7-methyladenine.. In terms of biological role, hydrolysis of the deoxyribose N-glycosidic bond to excise 3-methyladenine or 7-methyladenine from the damaged DNA polymer formed by alkylation lesions. Can release ethylated and propylated bases from DNA in addition to 3-methyladenine. The protein is DNA-3-methyladenine glycosylase 1 (mag1) of Schizosaccharomyces pombe (strain 972 / ATCC 24843) (Fission yeast).